Consider the following 91-residue polypeptide: Methanol dehydrogenase [cytochrome c] subunit 2 (91 aa).

A signal peptide spans 1–22 (MKHVLTLLALASVFAVSNQALA). A disulfide bridge connects residues C28 and C34.

This sequence belongs to the methanol dehydrogenase subunit 2 family. As to quaternary structure, heterotetramer composed of 2 alpha and 2 beta subunits.

It localises to the cell inner membrane. The catalysed reaction is 2 Fe(III)-[cytochrome cL] + a primary alcohol = 2 Fe(II)-[cytochrome cL] + an aldehyde + 2 H(+). In terms of biological role, catalyzes the oxidation of primary alcohols including methanol. The sequence is that of Methanol dehydrogenase [cytochrome c] subunit 2 (moxI) from Methylophilus methylotrophus (Bacterium W3A1).